A 153-amino-acid polypeptide reads, in one-letter code: Cytochrome c-type biogenesis protein CcmE (153 aa).

Residues 1–7 (MTRKKRR) are Cytoplasmic-facing. Residues 8–28 (LYFVVLGMLALFAAAGLTLTA) form a helical; Signal-anchor for type II membrane protein membrane-spanning segment. Over 29 to 153 (FQDNLVFFYS…PPTAAAAPAP (125 aa)) the chain is Periplasmic. Heme contacts are provided by H121 and Y125. A disordered region spans residues 132–153 (ESLKASGKWQHGPPTAAAAPAP). Positions 144 to 153 (PPTAAAAPAP) are enriched in low complexity.

Belongs to the CcmE/CycJ family.

It is found in the cell inner membrane. Its function is as follows. Heme chaperone required for the biogenesis of c-type cytochromes. Transiently binds heme delivered by CcmC and transfers the heme to apo-cytochromes in a process facilitated by CcmF and CcmH. The chain is Cytochrome c-type biogenesis protein CcmE from Rhodospirillum rubrum (strain ATCC 11170 / ATH 1.1.1 / DSM 467 / LMG 4362 / NCIMB 8255 / S1).